We begin with the raw amino-acid sequence, 377 residues long: Nitric oxide reductase FlRd-NAD(+) reductase (377 aa).

This sequence belongs to the FAD-dependent oxidoreductase family. Requires FAD as cofactor.

The protein resides in the cytoplasm. The enzyme catalyses 2 reduced [nitric oxide reductase rubredoxin domain] + NAD(+) + H(+) = 2 oxidized [nitric oxide reductase rubredoxin domain] + NADH. The protein operates within nitrogen metabolism; nitric oxide reduction. In terms of biological role, one of at least two accessory proteins for anaerobic nitric oxide (NO) reductase. Reduces the rubredoxin moiety of NO reductase. This Salmonella enteritidis PT4 (strain P125109) protein is Nitric oxide reductase FlRd-NAD(+) reductase.